Here is a 323-residue protein sequence, read N- to C-terminus: Sphingolipid delta(4)-desaturase DES1 (323 aa).

The N-myristoyl glycine moiety is linked to residue Gly-2. 2 helical membrane-spanning segments follow: residues 41–61 (PNLI…FYIV) and 68–88 (WVIF…TLGI). Positions 89–93 (HEIAH) match the Histidine box-1 motif. Residues 107-127 (WFGMFANLPIGIPYSVSFKSY) form a helical membrane-spanning segment. Positions 128-132 (HMDHH) match the Histidine box-2 motif. 3 helical membrane passes run 152–172 (FFCT…FYAF), 184–204 (YLEV…YYFL), and 209–229 (LVYM…SGHF). The Histidine box-3 signature appears at 259 to 263 (HNEHH). Position 307 is a phosphoserine (Ser-307).

The protein belongs to the fatty acid desaturase type 1 family. DEGS subfamily. In terms of assembly, interacts with RLBP1; the interaction increases synthesis of chromophore-precursors by DEGS1. In terms of processing, myristoylation can target the enzyme to the mitochondria leading to an increase in ceramide levels.

The protein localises to the mitochondrion membrane. Its subcellular location is the endoplasmic reticulum membrane. The enzyme catalyses an N-acylsphinganine + 2 Fe(II)-[cytochrome b5] + O2 + 2 H(+) = an N-acylsphing-4-enine + 2 Fe(III)-[cytochrome b5] + 2 H2O. It carries out the reaction all-trans-retinol = 11-cis-retinol. The catalysed reaction is all-trans-retinol = 9-cis-retinol. It catalyses the reaction all-trans-retinol = 13-cis-retinol. The enzyme catalyses 11-cis-retinol = 13-cis-retinol. It carries out the reaction 11-cis-retinol = 9-cis-retinol. Has sphingolipid-delta-4-desaturase activity. Converts D-erythro-sphinganine to D-erythro-sphingosine (E-sphing-4-enine). Catalyzes the equilibrium isomerization of retinols. The chain is Sphingolipid delta(4)-desaturase DES1 (DEGS1) from Pongo abelii (Sumatran orangutan).